The primary structure comprises 411 residues: MTGLCPLHQPSPLDHPHSGGTPMQNLSQLDVKGKRVLVRVDYNVPVGDGVVQDDTRITASVPTIKKLLDGGASVVLMSHFGRPKNGPEDKYSLKPVAEAVSRALGQDVKFIPSLPGSDETLQAVQALRPGEVALLENVRFEAGEEKNDAALNDKLAKLGDAFVLDAFGSAHRAHSSVSGVAGKLPHAAGGLLQSEVDALGKLLHAPEHPYVVIIGGAKVSDKIKVIENLLPKVDRMLIGGGMMFTFIKARGGQIGNSLVEDDQLDLAKGLLEKYGDKLLLPTDAVAADKFAADAQSKVVPADQIPDGWMGLDIGPDTQRAYADALQGAKTVFWNGPMGVFEFDQFAAGTNAVAAAVGSLKDQAYTVVGGGDSVSAINKSGKADQIDHISTGGGASLELLEGKELPGVVAMA.

The tract at residues Met1–Gln24 is disordered. Substrate-binding positions include Asp41–Asn43, Arg56, His79–Arg82, Arg139, and Arg172. Residues Lys222, Gly310, Glu341, and Gly369–Ser372 each bind ATP.

The protein belongs to the phosphoglycerate kinase family. As to quaternary structure, monomer.

Its subcellular location is the cytoplasm. It catalyses the reaction (2R)-3-phosphoglycerate + ATP = (2R)-3-phospho-glyceroyl phosphate + ADP. The protein operates within carbohydrate degradation; glycolysis; pyruvate from D-glyceraldehyde 3-phosphate: step 2/5. In Deinococcus radiodurans (strain ATCC 13939 / DSM 20539 / JCM 16871 / CCUG 27074 / LMG 4051 / NBRC 15346 / NCIMB 9279 / VKM B-1422 / R1), this protein is Phosphoglycerate kinase.